Here is a 367-residue protein sequence, read N- to C-terminus: UDP-N-acetylglucosamine--N-acetylmuramyl-(pentapeptide) pyrophosphoryl-undecaprenol N-acetylglucosamine transferase (367 aa).

Residues 10–12, asparagine 124, serine 196, and glutamine 300 each bind UDP-N-acetyl-alpha-D-glucosamine; that span reads TGG.

Belongs to the glycosyltransferase 28 family. MurG subfamily.

It localises to the cell membrane. It carries out the reaction di-trans,octa-cis-undecaprenyl diphospho-N-acetyl-alpha-D-muramoyl-L-alanyl-D-glutamyl-meso-2,6-diaminopimeloyl-D-alanyl-D-alanine + UDP-N-acetyl-alpha-D-glucosamine = di-trans,octa-cis-undecaprenyl diphospho-[N-acetyl-alpha-D-glucosaminyl-(1-&gt;4)]-N-acetyl-alpha-D-muramoyl-L-alanyl-D-glutamyl-meso-2,6-diaminopimeloyl-D-alanyl-D-alanine + UDP + H(+). The protein operates within cell wall biogenesis; peptidoglycan biosynthesis. Cell wall formation. Catalyzes the transfer of a GlcNAc subunit on undecaprenyl-pyrophosphoryl-MurNAc-pentapeptide (lipid intermediate I) to form undecaprenyl-pyrophosphoryl-MurNAc-(pentapeptide)GlcNAc (lipid intermediate II). The polypeptide is UDP-N-acetylglucosamine--N-acetylmuramyl-(pentapeptide) pyrophosphoryl-undecaprenol N-acetylglucosamine transferase (Natranaerobius thermophilus (strain ATCC BAA-1301 / DSM 18059 / JW/NM-WN-LF)).